The primary structure comprises 195 residues: Protein A43 (195 aa).

An N-terminal signal peptide occupies residues 1–21 (MMIKWIISILTMSIMPVLVYS). Residues 23-166 (SIFRFRSEDV…YKDINDKYND (144 aa)) lie on the Extracellular side of the membrane. Asn66 and Asn115 each carry an N-linked (GlcNAc...) asparagine; by host glycan. Residues 167–187 (IYDFTAICMLIASTLIVTIYV) traverse the membrane as a helical segment. The Cytoplasmic portion of the chain corresponds to 188–195 (FKKIKMNS).

It belongs to the orthopoxvirus OPG172 protein family.

It localises to the host membrane. Its subcellular location is the host cell surface. This is Protein A43 (OPG172) from Homo sapiens (Human).